Here is an 844-residue protein sequence, read N- to C-terminus: MEVELTNIQKATSSDYWSLASNQYPCGKFPKVSVGVTIPRTSSVSRGRDAASTAAFEKNLSQGTDGRSRPPKMDNASLQVSPEAANHGGSAKEVPKPVPAKVSVSQPDDNAIEQTGTFSFGTRREQDSHLDQLDRPPLVSSQGKRQVESADKNKPNSEMLRMKLWEILGGTSQNKEAVASPNPEDIETPCQPKSQIANGPSSGRQKVFTSPVPYNIKTPAQFNSQTANKPSSDPIESDSDSPQVVEVRPITRSLGRKKEPTGSTHQDKSGSAKKPLSTHRSTPKQKILDNVFAFNDKCTPKTVGKSANGESGSLRNLRSLSRRAKVEPKKAHCSDRISHKTTQDDMERKVPSKYIPSEKKGEKTNSFSSLSRTGKTAESCSRSPKRERRVNTMANVGARKMQLSENLLVKTLNDGEHKLSSPQLTSFKSKGKCSSISPQQKENDNTHIPEASDRTAARNSFNSTPSPAANPSPVLRKYSWEHDENPAINGKSGQKDASPLADRFSDMPDDFASPTFAANIKISPHRSKMLDDDLFSSKYPKGVNRSRSTSFTSDPESEPLDKMEKTNELPGSESPNSQEERQNRKQPHLSPLSPIESEGAQISIPSFRKGYKSHKWLSDVDSPDKSSIEHLGRKSHLKEGRKGKRQLTSPTHFATSGTQETMSDKEPEKVPENYLTRAFDQLVVVLGRFQTKIKSETRNKSSKILAATGEIIRQHLEGVEGQMQADVDKLVNAGKSKRKRLESTFEEQQEKLRILHEKFKEEVNQQLLGCKNSVEDFEAYHAELKGVADKQKASHKKLLQNAEKTVGAQLSDAETKIAEVQKRARKRMKGLKFVLKELIAETAE.

Disordered stretches follow at residues 41 to 389 (TSSV…RERR), 418 to 506 (KLSS…RFSD), 532 to 604 (DDLF…QISI), and 616 to 669 (WLSD…EPEK). Residues 106–120 (QPDDNAIEQTGTFSF) are compositionally biased toward polar residues. 2 stretches are compositionally biased toward basic and acidic residues: residues 122-134 (TRRE…DQLD) and 145-164 (RQVE…RMKL). Composition is skewed to polar residues over residues 191-208 (QPKS…QKVF) and 218-229 (TPAQFNSQTANK). 2 stretches are compositionally biased toward basic and acidic residues: residues 256–270 (RKKE…DKSG) and 324–363 (AKVE…KGEK). Composition is skewed to polar residues over residues 364–382 (TNSF…SCSR) and 420–440 (SSPQ…SPQQ). Residues 441–456 (KENDNTHIPEASDRTA) are compositionally biased toward basic and acidic residues. The segment covering 459 to 473 (NSFNSTPSPAANPSP) has biased composition (low complexity). Residues 545-554 (RSRSTSFTSD) show a composition bias toward polar residues. Residues 616 to 640 (WLSDVDSPDKSSIEHLGRKSHLKEG) show a composition bias toward basic and acidic residues. Polar residues predominate over residues 646–661 (QLTSPTHFATSGTQET). A coiled-coil region spans residues 731–765 (VNAGKSKRKRLESTFEEQQEKLRILHEKFKEEVNQ).

In terms of tissue distribution, expressed in pollen mother cells and the ovule tissues during meiosis.

The protein localises to the chromosome. The protein resides in the nucleus. Plays a crucial role in homologous chromosome pairing and synapsis in meiosis. Does not seem required for cytokinesis. Is essential for meiotic bouquet formation, homologous chromosome pairing and normal recombination, and synaptonemal complex (SC) assembly. Required for the proper association of PAIR2 with chromosomes. The sequence is that of Meiosis-specific protein PAIR3 from Oryza sativa subsp. japonica (Rice).